Here is a 357-residue protein sequence, read N- to C-terminus: tRNA/tmRNA (uracil-C(5))-methyltransferase (357 aa).

The S-adenosyl-L-methionine site is built by Gln-180, Tyr-209, Asn-214, Glu-230, and Asp-290. The active-site Nucleophile is Cys-315. The active-site Proton acceptor is Glu-349.

It belongs to the class I-like SAM-binding methyltransferase superfamily. RNA M5U methyltransferase family. TrmA subfamily.

It catalyses the reaction uridine(54) in tRNA + S-adenosyl-L-methionine = 5-methyluridine(54) in tRNA + S-adenosyl-L-homocysteine + H(+). The catalysed reaction is uridine(341) in tmRNA + S-adenosyl-L-methionine = 5-methyluridine(341) in tmRNA + S-adenosyl-L-homocysteine + H(+). Dual-specificity methyltransferase that catalyzes the formation of 5-methyluridine at position 54 (m5U54) in all tRNAs, and that of position 341 (m5U341) in tmRNA (transfer-mRNA). The sequence is that of tRNA/tmRNA (uracil-C(5))-methyltransferase from Campylobacter jejuni (strain RM1221).